The following is a 319-amino-acid chain: Ribosomal RNA small subunit methyltransferase H (319 aa).

S-adenosyl-L-methionine contacts are provided by residues 35–37, aspartate 55, phenylalanine 84, aspartate 104, and glutamine 111; that span reads AGH.

Belongs to the methyltransferase superfamily. RsmH family.

The protein resides in the cytoplasm. It catalyses the reaction cytidine(1402) in 16S rRNA + S-adenosyl-L-methionine = N(4)-methylcytidine(1402) in 16S rRNA + S-adenosyl-L-homocysteine + H(+). In terms of biological role, specifically methylates the N4 position of cytidine in position 1402 (C1402) of 16S rRNA. The protein is Ribosomal RNA small subunit methyltransferase H of Enterococcus hirae.